The sequence spans 757 residues: Serine/threonine-protein phosphatase with EF-hands 2 (757 aa).

The IQ domain occupies lysine 21 to asparagine 46. Positions alanine 128–lysine 544 are catalytic. Residues aspartate 179, histidine 181, aspartate 208, and asparagine 240 each coordinate Mn(2+). Histidine 241 functions as the Proton donor in the catalytic mechanism. Residue histidine 292 participates in Mn(2+) binding. Residues cysteine 318 to proline 349 are disordered. Residues arginine 321–asparagine 335 are compositionally biased toward basic and acidic residues. Position 492 (histidine 492) interacts with Mn(2+). 3 EF-hand domains span residues alanine 572–leucine 607, arginine 656–histidine 691, and isoleucine 696–serine 731. Ca(2+)-binding residues include aspartate 585, aspartate 587, serine 589, aspartate 596, aspartate 669, aspartate 671, serine 673, glutamate 680, aspartate 709, asparagine 711, aspartate 713, histidine 715, and glutamate 720.

This sequence belongs to the PPP phosphatase family. It depends on Mn(2+) as a cofactor. Detected in retina, more specifically in photoreceptors.

The enzyme catalyses O-phospho-L-seryl-[protein] + H2O = L-seryl-[protein] + phosphate. It catalyses the reaction O-phospho-L-threonyl-[protein] + H2O = L-threonyl-[protein] + phosphate. Activated by calcium. In terms of biological role, may play a role in phototransduction. May dephosphorylate photoactivated rhodopsin. May function as a calcium sensing regulator of ionic currents, energy production or synaptic transmission. The protein is Serine/threonine-protein phosphatase with EF-hands 2 (Ppef2) of Mus musculus (Mouse).